A 130-amino-acid polypeptide reads, in one-letter code: Large ribosomal subunit protein bL20 (130 aa).

It belongs to the bacterial ribosomal protein bL20 family.

Binds directly to 23S ribosomal RNA and is necessary for the in vitro assembly process of the 50S ribosomal subunit. It is not involved in the protein synthesizing functions of that subunit. In Salinispora tropica (strain ATCC BAA-916 / DSM 44818 / JCM 13857 / NBRC 105044 / CNB-440), this protein is Large ribosomal subunit protein bL20.